We begin with the raw amino-acid sequence, 152 residues long: Ribosome maturation factor RimP (152 aa).

Belongs to the RimP family.

The protein resides in the cytoplasm. In terms of biological role, required for maturation of 30S ribosomal subunits. The protein is Ribosome maturation factor RimP of Serratia proteamaculans (strain 568).